We begin with the raw amino-acid sequence, 300 residues long: NADH-ubiquinone oxidoreductase chain 2 (300 aa).

Helical transmembrane passes span 4-24 (FFCIFVVFLCVLNFFTSNVLV), 29-49 (FLLMTVVFVCLSKGSGSYVGI), 58-78 (SLGLFFLVFNVFLLQFFIVMM), 87-107 (FWVFSVTGSLYDWLLMWFLTF), 122-142 (FSAFFIFLFGICVCYFQLFVL), 165-185 (FLSVVNVIYLFFYYVVLMAFL), 201-221 (VLLVFLNVPFSVSFFIKIFVL), 231-251 (FLLFLLLMMFLSMLCFSLWLV), and 267-287 (VLFFLVFPMMVFSVIYYFSKI).

This sequence belongs to the complex I subunit 2 family.

The protein resides in the mitochondrion inner membrane. It catalyses the reaction a ubiquinone + NADH + 5 H(+)(in) = a ubiquinol + NAD(+) + 4 H(+)(out). Functionally, core subunit of the mitochondrial membrane respiratory chain NADH dehydrogenase (Complex I) that is believed to belong to the minimal assembly required for catalysis. Complex I functions in the transfer of electrons from NADH to the respiratory chain. The immediate electron acceptor for the enzyme is believed to be ubiquinone. This chain is NADH-ubiquinone oxidoreductase chain 2 (ND2), found in Ascaris suum (Pig roundworm).